The sequence spans 426 residues: Serine--tRNA ligase (426 aa).

230–232 (TAE) contacts L-serine. Position 261 to 263 (261 to 263 (RSE)) interacts with ATP. An L-serine-binding site is contributed by Glu284. 348 to 351 (EISS) contacts ATP. Ser384 is an L-serine binding site.

The protein belongs to the class-II aminoacyl-tRNA synthetase family. Type-1 seryl-tRNA synthetase subfamily. In terms of assembly, homodimer. The tRNA molecule binds across the dimer.

It is found in the cytoplasm. The enzyme catalyses tRNA(Ser) + L-serine + ATP = L-seryl-tRNA(Ser) + AMP + diphosphate + H(+). The catalysed reaction is tRNA(Sec) + L-serine + ATP = L-seryl-tRNA(Sec) + AMP + diphosphate + H(+). It participates in aminoacyl-tRNA biosynthesis; selenocysteinyl-tRNA(Sec) biosynthesis; L-seryl-tRNA(Sec) from L-serine and tRNA(Sec): step 1/1. In terms of biological role, catalyzes the attachment of serine to tRNA(Ser). Is also able to aminoacylate tRNA(Sec) with serine, to form the misacylated tRNA L-seryl-tRNA(Sec), which will be further converted into selenocysteinyl-tRNA(Sec). In Streptococcus mutans serotype c (strain ATCC 700610 / UA159), this protein is Serine--tRNA ligase.